The following is a 219-amino-acid chain: Ribose-5-phosphate isomerase A (219 aa).

Substrate contacts are provided by residues 28 to 31, 81 to 84, and 94 to 97; these read TGST, DGAD, and KGGG. The active-site Proton acceptor is Glu103. Lys121 provides a ligand contact to substrate.

This sequence belongs to the ribose 5-phosphate isomerase family. Homodimer.

The catalysed reaction is aldehydo-D-ribose 5-phosphate = D-ribulose 5-phosphate. Its pathway is carbohydrate degradation; pentose phosphate pathway; D-ribose 5-phosphate from D-ribulose 5-phosphate (non-oxidative stage): step 1/1. Catalyzes the reversible conversion of ribose-5-phosphate to ribulose 5-phosphate. The protein is Ribose-5-phosphate isomerase A of Shigella boydii serotype 18 (strain CDC 3083-94 / BS512).